The following is a 300-amino-acid chain: Ankyrin repeat domain-containing protein 54 (300 aa).

A disordered region spans residues 1 to 27 (MAAAAGDADDEPRSGHSSSEGECAVAP). Ala2 carries the post-translational modification N-acetylalanine. Phosphoserine is present on residues Ser58 and Ser63. A Nuclear localization signal (NLS) motif is present at residues 99–117 (RRLGPTGKEVHALKRLRDS). ANK repeat units follow at residues 109 to 138 (HALK…DPCA), 142 to 171 (KGRT…DPNQ), 175 to 204 (LGNT…RVDA), and 208 to 244 (AGRT…IIHM). An LYN-binding region spans residues 141 to 241 (DKGRTALHFA…EAVRLEVKQI (101 aa)). Positions 283 to 293 (LLASFTSLSLQ) match the Nuclear export signal (NES) motif.

As to quaternary structure, interacts (via ankyrin repeat region) with LYN (via SH3-domain) in an activation-independent status of LYN. Forms a multiprotein complex with LYN and HCLS1. Interacts with TSN2, VAV1, DBNL and LASP1.

It is found in the nucleus. Its subcellular location is the cytoplasm. The protein resides in the midbody. Its function is as follows. Plays an important role in regulating intracellular signaling events associated with erythroid terminal differentiation. This chain is Ankyrin repeat domain-containing protein 54 (ANKRD54), found in Homo sapiens (Human).